The chain runs to 388 residues: Beta-lactamase (388 aa).

The N-terminal stretch at 1–24 is a signal peptide; that stretch reads MMKKSIINTLIFTSIATFPLYTLA. Serine 89 (acyl-ester intermediate) is an active-site residue. The active-site Proton acceptor is tyrosine 175. 342–344 provides a ligand contact to substrate; it reads KTG.

The protein belongs to the class-C beta-lactamase family.

The protein localises to the periplasm. The enzyme catalyses a beta-lactam + H2O = a substituted beta-amino acid. In terms of biological role, this protein is a serine beta-lactamase with a substrate specificity for cephalosporins. This is Beta-lactamase (ampC) from Yersinia enterocolitica.